The primary structure comprises 318 residues: Galactose-1-phosphate uridylyltransferase (318 aa).

3 residues coordinate Zn(2+): cysteine 32, cysteine 35, and histidine 90. Asparagine 130 is a UDP-alpha-D-glucose binding site. Histidine 141 provides a ligand contact to Zn(2+). Histidine 143 serves as the catalytic Tele-UMP-histidine intermediate. Position 145 (glutamine 145) interacts with UDP-alpha-D-glucose.

Belongs to the galactose-1-phosphate uridylyltransferase type 1 family. The cofactor is Zn(2+).

The catalysed reaction is alpha-D-galactose 1-phosphate + UDP-alpha-D-glucose = alpha-D-glucose 1-phosphate + UDP-alpha-D-galactose. The protein operates within carbohydrate metabolism; galactose metabolism. The sequence is that of Galactose-1-phosphate uridylyltransferase (galT) from Thermotoga maritima (strain ATCC 43589 / DSM 3109 / JCM 10099 / NBRC 100826 / MSB8).